The chain runs to 164 residues: UBA-like domain-containing protein 2 (164 aa).

N-acetylserine is present on S2. Residues 144–164 (PPGASQGGAPQKAMAAMDGQR) form a disordered region.

The protein belongs to the UBALD family.

This chain is UBA-like domain-containing protein 2 (Ubald2), found in Mus musculus (Mouse).